Reading from the N-terminus, the 355-residue chain is GTPase Obg (355 aa).

One can recognise an Obg domain in the interval Met1 to Leu159. The region spanning Ala160–Asp342 is the OBG-type G domain. Residues Gly166–Ser173, Phe191–Tyr195, Asp213–Gly216, Asn292–Asp295, and Ser323–Leu325 contribute to the GTP site. The Mg(2+) site is built by Ser173 and Thr193.

Belongs to the TRAFAC class OBG-HflX-like GTPase superfamily. OBG GTPase family. As to quaternary structure, monomer. Mg(2+) serves as cofactor.

Its subcellular location is the cytoplasm. In terms of biological role, an essential GTPase which binds GTP, GDP and possibly (p)ppGpp with moderate affinity, with high nucleotide exchange rates and a fairly low GTP hydrolysis rate. Plays a role in control of the cell cycle, stress response, ribosome biogenesis and in those bacteria that undergo differentiation, in morphogenesis control. This chain is GTPase Obg, found in Xanthomonas axonopodis pv. citri (strain 306).